The primary structure comprises 938 residues: Isoleucine--tRNA ligase (938 aa).

The 'HIGH' region signature appears at 58-68 (PYANGHIHLGT). E565 contributes to the L-isoleucyl-5'-AMP binding site. The short motif at 606-610 (KMSKS) is the 'KMSKS' region element. Position 609 (K609) interacts with ATP. 4 residues coordinate Zn(2+): C905, C908, C925, and C928.

Belongs to the class-I aminoacyl-tRNA synthetase family. IleS type 1 subfamily. In terms of assembly, monomer. Zn(2+) is required as a cofactor.

The protein localises to the cytoplasm. The catalysed reaction is tRNA(Ile) + L-isoleucine + ATP = L-isoleucyl-tRNA(Ile) + AMP + diphosphate. In terms of biological role, catalyzes the attachment of isoleucine to tRNA(Ile). As IleRS can inadvertently accommodate and process structurally similar amino acids such as valine, to avoid such errors it has two additional distinct tRNA(Ile)-dependent editing activities. One activity is designated as 'pretransfer' editing and involves the hydrolysis of activated Val-AMP. The other activity is designated 'posttransfer' editing and involves deacylation of mischarged Val-tRNA(Ile). The polypeptide is Isoleucine--tRNA ligase (Nitratidesulfovibrio vulgaris (strain DSM 19637 / Miyazaki F) (Desulfovibrio vulgaris)).